The primary structure comprises 348 residues: Phosphoribosylformylglycinamidine cyclo-ligase (348 aa).

This sequence belongs to the AIR synthase family.

The protein resides in the cytoplasm. The catalysed reaction is 2-formamido-N(1)-(5-O-phospho-beta-D-ribosyl)acetamidine + ATP = 5-amino-1-(5-phospho-beta-D-ribosyl)imidazole + ADP + phosphate + H(+). Its pathway is purine metabolism; IMP biosynthesis via de novo pathway; 5-amino-1-(5-phospho-D-ribosyl)imidazole from N(2)-formyl-N(1)-(5-phospho-D-ribosyl)glycinamide: step 2/2. The protein is Phosphoribosylformylglycinamidine cyclo-ligase of Geobacter sulfurreducens (strain ATCC 51573 / DSM 12127 / PCA).